The primary structure comprises 458 residues: Argininosuccinate lyase (458 aa).

This sequence belongs to the lyase 1 family. Argininosuccinate lyase subfamily.

It is found in the cytoplasm. It carries out the reaction 2-(N(omega)-L-arginino)succinate = fumarate + L-arginine. It participates in amino-acid biosynthesis; L-arginine biosynthesis; L-arginine from L-ornithine and carbamoyl phosphate: step 3/3. The protein is Argininosuccinate lyase of Pseudoalteromonas atlantica (strain T6c / ATCC BAA-1087).